A 214-amino-acid chain; its full sequence is Transcriptional activator protein ExaE (214 aa).

Residues 2 to 118 (GILLVDDHPM…VVLEAVRRVL (117 aa)) form the Response regulatory domain. Asp53 bears the 4-aspartylphosphate mark. The region spanning 143–208 (GNARLQGLTQ…ELVHLAIEAG (66 aa)) is the HTH luxR-type domain. The segment at residues 167-186 (TRLIAQQLCISAKTVSNYLT) is a DNA-binding region (H-T-H motif).

Positive regulator of the expression of the gene qedA and the activity of ADH I but does not affect the activities of ADH IIB or ADH IIG. This Pseudomonas putida (Arthrobacter siderocapsulatus) protein is Transcriptional activator protein ExaE.